Here is a 240-residue protein sequence, read N- to C-terminus: Cysteine-rich venom protein (240 aa).

A signal peptide spans 1-19 (MIAFIVLPILAAVLQQSSG). The 128-residue stretch at 39–166 (DLHNSLRRSV…EYSYFYVCQY (128 aa)) folds into the SCP domain. Disulfide bonds link cysteine 75-cysteine 153, cysteine 92-cysteine 167, cysteine 148-cysteine 164, cysteine 186-cysteine 193, cysteine 189-cysteine 198, cysteine 202-cysteine 235, cysteine 211-cysteine 229, and cysteine 220-cysteine 233. The 34-residue stretch at 202-235 (CRQENKFTNCDSLVRQSSCQDNYMKTNCPASCFC) folds into the ShKT domain.

It belongs to the CRISP family. In terms of tissue distribution, expressed by the venom gland.

The protein localises to the secreted. Functionally, blocks contraction of smooth muscle elicited by high potassium-induced depolarization, but does not block caffeine-stimulated contraction. May target voltage-gated calcium channels on smooth muscle. The sequence is that of Cysteine-rich venom protein from Protobothrops jerdonii (Jerdon's pitviper).